Here is a 125-residue protein sequence, read N- to C-terminus: uncharacterized protein (125 aa).

Positions 1–21 (MIRNIIITISAILLLTSKGFA) are cleaved as a signal peptide. The stretch at 54 to 102 (KPEIREEIQKYRVEIVNINKKKRELYDKLSKEAQNFLAKEQEYKQRLSS) forms a coiled coil. The interval 96–125 (YKQRLSSSSMATEDSKDNNTAKDNKDADKK) is disordered. Over residues 108-125 (EDSKDNNTAKDNKDADKK) the composition is skewed to basic and acidic residues.

This is an uncharacterized protein from Rickettsia bellii (strain RML369-C).